The following is a 493-amino-acid chain: Glutamyl-tRNA(Gln) amidotransferase subunit A (493 aa).

Active-site charge relay system residues include Lys-79 and Ser-159. Ser-183 functions as the Acyl-ester intermediate in the catalytic mechanism.

The protein belongs to the amidase family. GatA subfamily. Heterotrimer of A, B and C subunits.

The catalysed reaction is L-glutamyl-tRNA(Gln) + L-glutamine + ATP + H2O = L-glutaminyl-tRNA(Gln) + L-glutamate + ADP + phosphate + H(+). Its function is as follows. Allows the formation of correctly charged Gln-tRNA(Gln) through the transamidation of misacylated Glu-tRNA(Gln) in organisms which lack glutaminyl-tRNA synthetase. The reaction takes place in the presence of glutamine and ATP through an activated gamma-phospho-Glu-tRNA(Gln). This is Glutamyl-tRNA(Gln) amidotransferase subunit A from Brucella melitensis biotype 2 (strain ATCC 23457).